Consider the following 309-residue polypeptide: ATP synthase gamma chain (309 aa).

It belongs to the ATPase gamma chain family. In terms of assembly, F-type ATPases have 2 components, CF(1) - the catalytic core - and CF(0) - the membrane proton channel. CF(1) has five subunits: alpha(3), beta(3), gamma(1), delta(1), epsilon(1). CF(0) has three main subunits: a, b and c.

It is found in the cell membrane. Functionally, produces ATP from ADP in the presence of a proton gradient across the membrane. The gamma chain is believed to be important in regulating ATPase activity and the flow of protons through the CF(0) complex. The protein is ATP synthase gamma chain of Salinispora tropica (strain ATCC BAA-916 / DSM 44818 / JCM 13857 / NBRC 105044 / CNB-440).